The chain runs to 396 residues: Adenylyltransferase and sulfurtransferase UBA4 (396 aa).

ATP-binding positions include Gly51, Asp72, 79 to 83 (SNLHR), Lys95, and 139 to 140 (DG). 2 residues coordinate Zn(2+): Cys180 and Cys183. The Glycyl thioester intermediate; for adenylyltransferase activity role is filled by Cys197. The Zn(2+) site is built by Cys257 and Cys260. In terms of domain architecture, Rhodanese spans 305 to 394 (VSTKHILLDV…WAKNVDEKFP (90 aa)). Catalysis depends on Cys355, which acts as the Cysteine persulfide intermediate; for sulfurtransferase activity.

It in the N-terminal section; belongs to the HesA/MoeB/ThiF family. UBA4 subfamily. Requires Zn(2+) as cofactor.

It localises to the cytoplasm. It is found in the cytosol. The protein operates within tRNA modification; 5-methoxycarbonylmethyl-2-thiouridine-tRNA biosynthesis. In terms of biological role, plays a central role in 2-thiolation of mcm(5)S(2)U at tRNA wobble positions of cytosolic tRNA(Lys), tRNA(Glu) and tRNA(Gln). Acts by mediating the C-terminal thiocarboxylation of sulfur carrier URM1. Its N-terminus first activates URM1 as acyl-adenylate (-COAMP), then the persulfide sulfur on the catalytic cysteine is transferred to URM1 to form thiocarboxylation (-COSH) of its C-terminus. The reaction probably involves hydrogen sulfide that is generated from the persulfide intermediate and that acts as a nucleophile towards URM1. Subsequently, a transient disulfide bond is formed. Does not use thiosulfate as sulfur donor; NFS1 probably acting as a sulfur donor for thiocarboxylation reactions. Prior mcm(5) tRNA modification by the elongator complex is required for 2-thiolation. May also be involved in protein urmylation. The sequence is that of Adenylyltransferase and sulfurtransferase UBA4 from Yarrowia lipolytica (strain CLIB 122 / E 150) (Yeast).